The following is a 409-amino-acid chain: Dual-specificity RNA methyltransferase RlmN (409 aa).

Catalysis depends on Glu-126, which acts as the Proton acceptor. One can recognise a Radical SAM core domain in the interval 132–373; sequence EEGRGTLCLS…NQAGYASPIR (242 aa). Cys-139 and Cys-384 are disulfide-bonded. [4Fe-4S] cluster contacts are provided by Cys-146, Cys-150, and Cys-153. S-adenosyl-L-methionine is bound by residues 210 to 211, Ser-242, 264 to 266, and Asn-341; these read GE and SLH. The S-methylcysteine intermediate role is filled by Cys-384.

This sequence belongs to the radical SAM superfamily. RlmN family. The cofactor is [4Fe-4S] cluster.

It is found in the cytoplasm. It catalyses the reaction adenosine(2503) in 23S rRNA + 2 reduced [2Fe-2S]-[ferredoxin] + 2 S-adenosyl-L-methionine = 2-methyladenosine(2503) in 23S rRNA + 5'-deoxyadenosine + L-methionine + 2 oxidized [2Fe-2S]-[ferredoxin] + S-adenosyl-L-homocysteine. The enzyme catalyses adenosine(37) in tRNA + 2 reduced [2Fe-2S]-[ferredoxin] + 2 S-adenosyl-L-methionine = 2-methyladenosine(37) in tRNA + 5'-deoxyadenosine + L-methionine + 2 oxidized [2Fe-2S]-[ferredoxin] + S-adenosyl-L-homocysteine. Its function is as follows. Specifically methylates position 2 of adenine 2503 in 23S rRNA and position 2 of adenine 37 in tRNAs. m2A2503 modification seems to play a crucial role in the proofreading step occurring at the peptidyl transferase center and thus would serve to optimize ribosomal fidelity. The protein is Dual-specificity RNA methyltransferase RlmN of Bartonella quintana (strain Toulouse) (Rochalimaea quintana).